The following is a 69-amino-acid chain: Regulatory protein MokC (69 aa).

A helical membrane pass occupies residues 24–44 (KAMIVALIVICITAVVAALVT).

Belongs to the Hok/Gef family.

The protein localises to the cell inner membrane. Might be the toxic component of a type I toxin-antitoxin (TA) system. Regulatory peptide which completely overlaps hokC and enables hokC expression. This chain is Regulatory protein MokC (mokC), found in Escherichia coli (strain K12).